The sequence spans 397 residues: Putative teichuronic acid biosynthesis glycosyltransferase TuaH (397 aa).

The protein belongs to the glycosyltransferase group 1 family.

Its pathway is cell wall biogenesis; teichuronic acid biosynthesis. This chain is Putative teichuronic acid biosynthesis glycosyltransferase TuaH (tuaH), found in Bacillus subtilis (strain 168).